The primary structure comprises 1100 residues: MASRTRSESPLEPRLYAGAGSRADHPSLVLMLSVVMLVTCLEAAKLTVGFHAPWNISHPFSVQRLGAGLQTVVDKLNSEPVGLGNVSWEFTYTNSTCSAKESLAVFIDQVQKEHISALFGPACPEAAEVIGLLASEWNIPLFDFVGQMAALKDHFWCDTCVTLVPPKQEISAVLRESLRYLGWEHIGVFGGSSADSSWEQVDEMWGAVEDGLQFHFNITASMRYNSSSSDLLQEGLRNMSYVARVIILICSSEDARRILQAAVDLGLDTGEFVFILLQQLEDSFWKEVLTKDKVIRFPKVYESVFLIAPSAYGGGIGDDGFRKQVSQELRRPPFQSSITSEDQVSPYSAYLHDALLLYAQTVEEMRKAEKDFRDGRQLISTLRAGQVTLQGITGPVLLDSQGKRHVDYSVYALQESGNRSLFLPFLHYDSFQKVIRPWRNDSNTSWPHGSLPEYKPGCGFHNDLCKTKPPTVAGMTVTVTAVIPTVTFLVLASAAAITGLMLWRLRGKVQSHPGDTWWQIRYDSITLLPQHKLSHRGTPVSRRNVSDTSTVKASADCGSLVKRHQDEELFFAPVGLYQGNQVALCYIGDEAEAWVKKPTVRREVCLMCELKHENIVPFFGVCTEPPNICIVTQYCKKGSLQDVMRNSDHEIDWIFKLSFAYDIVNGLLFLHGSPLRSHGNLKPSNCLVDSHMQLKLSGFGLWEFKHGSTWRSYNQEATDHSELYWTAPELLRLRESPCSGTPQGDVYSFAILLRDLIHQQAHGPFEDLEAAPEEIISRIKDPRAPVPLRPSLLEDKGDGRIVALVRECWDESPELRPIFPSIKKTLREASPRGHVSILDSMMGKLETYANHLEEVVEERTRELVAEKRKVEKLLSTMLPSFVGEQLIAGKSVEPEHFESVTIFFSDIVGFTKLCSLSSPLQVVKLLNDLYSLFDHTIQSHDVYKVETIGDAYMVASGLPIRNGAQHADEIATMALHLLSVTTHFQIGHMPEERLKLRIGLHTGPVVAGVVGITMPRYCLFGDTVNMASRMESSSLPLRIHVSQSTAGALLAAGGYHLQKRGTISVKGKGEQTTFWLKGKDGFPVPLPEFTEEEAKVSEIL.

The N-terminal stretch at 1 to 43 (MASRTRSESPLEPRLYAGAGSRADHPSLVLMLSVVMLVTCLEA) is a signal peptide. Residues 44–481 (AKLTVGFHAP…VAGMTVTVTA (438 aa)) lie on the Extracellular side of the membrane. N-linked (GlcNAc...) asparagine glycosylation is found at Asn55, Asn85, Asn94, Asn217, Asn225, Asn238, Asn418, Asn440, and Asn443. A helical transmembrane segment spans residues 482–502 (VIPTVTFLVLASAAAITGLML). Over 503–1100 (WRLRGKVQSH…EEEAKVSEIL (598 aa)) the chain is Cytoplasmic. A Protein kinase domain is found at 546 to 837 (SDTSTVKASA…EASPRGHVSI (292 aa)). One can recognise a Guanylate cyclase domain in the interval 901 to 1031 (TIFFSDIVGF…DTVNMASRME (131 aa)).

The protein belongs to the adenylyl cyclase class-4/guanylyl cyclase family. As to quaternary structure, homooligomer. In vitro interacts with NPR1/GC-A. N-glycosylated. In terms of tissue distribution, highly expressed in testis.

It is found in the cell membrane. It carries out the reaction GTP = 3',5'-cyclic GMP + diphosphate. The protein is Guanylate cyclase 2G (Gucy2g) of Mus musculus (Mouse).